A 198-amino-acid chain; its full sequence is Zinc finger protein 41 (198 aa).

Positions 1–12 (MEKPATRKKKSQ) are enriched in basic residues. The interval 1–56 (MEKPATRKKKSQAPKEEAGAQKATVKGEKTSKGKKATKKPRKPRRPRKEPVLSPED) is disordered. Residues 13-31 (APKEEAGAQKATVKGEKTS) are compositionally biased toward basic and acidic residues. Residues 32-47 (KGKKATKKPRKPRRPR) are compositionally biased toward basic residues. 4 consecutive C2H2-type zinc fingers follow at residues 87–109 (YECG…QRVH), 115–137 (FKCD…QRIH), 143–165 (FKCG…QKTH), and 171–193 (YGCE…RKRH).

It belongs to the krueppel C2H2-type zinc-finger protein family. In terms of tissue distribution, predominantly in the spermatocytes and spermatids of testes. It is also expressed in the fetus and embryonic stem cells at lower levels.

It localises to the nucleus. Functionally, a putative DNA-binding regulatory protein associated with meiosis in spermatogenesis. The polypeptide is Zinc finger protein 41 (Zfp41) (Mus musculus (Mouse)).